A 395-amino-acid chain; its full sequence is Protein PELOTA 2 (395 aa).

This sequence belongs to the eukaryotic release factor 1 family. Pelota subfamily. A divalent metal cation serves as cofactor.

It is found in the cytoplasm. Its subcellular location is the nucleus. Functionally, component of the Pelota-HBS1L complex, a complex that recognizes stalled ribosomes and triggers the No-Go Decay (NGD) pathway. In the Pelota-HBS1L complex, pelo recognizes ribosomes stalled at the 3' end of an mRNA and engages stalled ribosomes by destabilizing mRNA in the mRNA channel. Following ribosome-binding, the Pelota-HBS1L complex promotes the disassembly of stalled ribosomes, followed by degradation of damaged mRNAs as part of the NGD pathway. In Arabidopsis thaliana (Mouse-ear cress), this protein is Protein PELOTA 2 (PEL2).